We begin with the raw amino-acid sequence, 22 residues long: 5-methyltetrahydropteroyltriglutamate--homocysteine methyltransferase (22 aa).

This sequence belongs to the vitamin-B12 independent methionine synthase family. The cofactor is Zn(2+).

It is found in the cytoplasm. The catalysed reaction is 5-methyltetrahydropteroyltri-L-glutamate + L-homocysteine = tetrahydropteroyltri-L-glutamate + L-methionine. The protein operates within amino-acid biosynthesis; L-methionine biosynthesis via de novo pathway; L-methionine from L-homocysteine (MetE route): step 1/1. In terms of biological role, catalyzes the transfer of a methyl group from 5-methyltetrahydrofolate to homocysteine resulting in methionine formation. This is 5-methyltetrahydropteroyltriglutamate--homocysteine methyltransferase from Pseudotsuga menziesii (Douglas-fir).